The chain runs to 103 residues: Large ribosomal subunit protein uL24 (103 aa).

Belongs to the universal ribosomal protein uL24 family. Part of the 50S ribosomal subunit.

In terms of biological role, one of two assembly initiator proteins, it binds directly to the 5'-end of the 23S rRNA, where it nucleates assembly of the 50S subunit. Functionally, one of the proteins that surrounds the polypeptide exit tunnel on the outside of the subunit. This chain is Large ribosomal subunit protein uL24, found in Dehalococcoides mccartyi (strain ATCC BAA-2266 / KCTC 15142 / 195) (Dehalococcoides ethenogenes (strain 195)).